Here is a 166-residue protein sequence, read N- to C-terminus: Protein SprT (166 aa).

One can recognise a SprT-like domain in the interval 19-164 (REHLAKANLK…CVHCGDLLVA (146 aa)). His-78 contributes to the Zn(2+) binding site. Glu-79 is an active-site residue. Residue His-82 coordinates Zn(2+).

The protein belongs to the SprT family. Requires Zn(2+) as cofactor.

The protein localises to the cytoplasm. This chain is Protein SprT, found in Klebsiella pneumoniae (strain 342).